Reading from the N-terminus, the 174-residue chain is Larval cuticle protein A1A (174 aa).

Tandem repeats lie at residues 45–48 and 67–70. The region spanning 84–150 is the Chitin-binding type R&amp;R domain; sequence NPQYSFGYDV…AVVHREPLVA (67 aa). Residues 155 to 158 form repeat 3; sequence AAPA.

Functionally, component of the cuticle of the larva of Tenebrio molitor. The sequence is that of Larval cuticle protein A1A from Tenebrio molitor (Yellow mealworm beetle).